Consider the following 143-residue polypeptide: Large ribosomal subunit protein uL11 (143 aa).

It belongs to the universal ribosomal protein uL11 family. In terms of assembly, part of the ribosomal stalk of the 50S ribosomal subunit. Interacts with L10 and the large rRNA to form the base of the stalk. L10 forms an elongated spine to which L12 dimers bind in a sequential fashion forming a multimeric L10(L12)X complex. In terms of processing, one or more lysine residues are methylated.

In terms of biological role, forms part of the ribosomal stalk which helps the ribosome interact with GTP-bound translation factors. The sequence is that of Large ribosomal subunit protein uL11 from Burkholderia ambifaria (strain MC40-6).